Reading from the N-terminus, the 63-residue chain is Large ribosomal subunit protein uL29 (63 aa).

It belongs to the universal ribosomal protein uL29 family.

This chain is Large ribosomal subunit protein uL29, found in Neisseria meningitidis serogroup C (strain 053442).